The following is a 962-amino-acid chain: pH-response regulator protein palF/prr-3 (962 aa).

Disordered regions lie at residues 1-43, 225-326, 568-675, and 689-962; these read MGPF…DSST, APPK…THPS, TDSN…PDEN, and RLLP…RYER. Residues 237 to 246 are compositionally biased toward basic residues; the sequence is ISKRAKKKRP. 3 stretches are compositionally biased toward polar residues: residues 297–307, 314–326, and 581–596; these read GFSQAPRSVSH, SGDS…THPS, and PSLT…SNYV. Low complexity-rich tracts occupy residues 696-722 and 738-747; these read PIAA…PDSS and PTPAATPATA. The span at 793-805 shows a compositional bias: basic and acidic residues; sequence TEDKQELERRRLL. Residues 830–839 show a composition bias toward low complexity; it reads AGPSGSRAGP. Residues 840–849 show a composition bias toward pro residues; it reads SAPPPAPPVA. Positions 913–928 are enriched in low complexity; the sequence is PSSPVLAPASAFFPAS. The segment covering 929–949 has biased composition (polar residues); sequence GSGNVHDSPREQGQQARSDSS.

This sequence belongs to the arrestin family. PalF/RIM8 subfamily.

Functionally, required for the proteolytic cleavage of the transcription factor pacc-1 in response to alkaline ambient pH. This chain is pH-response regulator protein palF/prr-3 (prr-3), found in Neurospora crassa (strain ATCC 24698 / 74-OR23-1A / CBS 708.71 / DSM 1257 / FGSC 987).